The following is a 307-amino-acid chain: Protein phosphatase PTC7 homolog fig (307 aa).

Residues 41 to 300 (VQGSSKDQQL…DDITVILASV (260 aa)) form the PPM-type phosphatase domain. D77, G78, and D222 together coordinate Mn(2+).

It belongs to the PP2C family. The cofactor is Mg(2+). Mn(2+) serves as cofactor.

The enzyme catalyses O-phospho-L-seryl-[protein] + H2O = L-seryl-[protein] + phosphate. The catalysed reaction is O-phospho-L-threonyl-[protein] + H2O = L-threonyl-[protein] + phosphate. This chain is Protein phosphatase PTC7 homolog fig, found in Drosophila grimshawi (Hawaiian fruit fly).